We begin with the raw amino-acid sequence, 435 residues long: Galactomannan galactosyltransferase 1 (435 aa).

Residues 1–20 (MAKFGSRNKSPKWISNGCCF) lie on the Cytoplasmic side of the membrane. Residues 21 to 41 (LLGAFTALLLLWGLCSFIIPI) form a helical; Signal-anchor for type II membrane protein membrane-spanning segment. Residues 42–435 (PNTDPKLNSV…SPLPFGYPAA (394 aa)) are Lumenal-facing. 2 N-linked (GlcNAc...) asparagine glycosylation sites follow: Asn230 and Asn328. The stretch at 321-354 (EIVKTYENISERYDEVERKVEGLRRRHAEKVSEK) forms a coiled coil.

It belongs to the glycosyltransferase 34 family.

It is found in the golgi apparatus membrane. Functionally, galactomannan galactosyltransferase (GMGT) involved in galactomannan biosynthesis in seed endosperm. GMGT specificity is an important factor regulating the distribution and amount of alpha-1,6-galactose (Gal) substitution of the beta-1,4-linked mannan backbone. This chain is Galactomannan galactosyltransferase 1 (GMGT1), found in Cyamopsis tetragonoloba (Guar).